The primary structure comprises 496 residues: Glycerol kinase (496 aa).

Thr12 is a binding site for ADP. Thr12, Thr13, and Ser14 together coordinate ATP. Thr12 contacts sn-glycerol 3-phosphate. Position 16 (Arg16) interacts with ADP. Sn-glycerol 3-phosphate is bound by residues Arg82, Glu83, and Tyr134. The glycerol site is built by Arg82, Glu83, and Tyr134. His230 carries the phosphohistidine; by HPr modification. Sn-glycerol 3-phosphate is bound at residue Asp244. Asp244 and Gln245 together coordinate glycerol. Thr266 and Gly309 together coordinate ADP. ATP is bound by residues Thr266, Gly309, Gln313, and Gly410. ADP contacts are provided by Gly410 and Asn414.

It belongs to the FGGY kinase family. In terms of assembly, homotetramer and homodimer (in equilibrium). In terms of processing, the phosphoenolpyruvate-dependent sugar phosphotransferase system (PTS), including enzyme I, and histidine-containing protein (HPr) are required for the phosphorylation, which leads to the activation of the enzyme.

It catalyses the reaction glycerol + ATP = sn-glycerol 3-phosphate + ADP + H(+). The protein operates within polyol metabolism; glycerol degradation via glycerol kinase pathway; sn-glycerol 3-phosphate from glycerol: step 1/1. With respect to regulation, activated by phosphorylation and inhibited by fructose 1,6-bisphosphate (FBP). Key enzyme in the regulation of glycerol uptake and metabolism. Catalyzes the phosphorylation of glycerol to yield sn-glycerol 3-phosphate. In Bacillus licheniformis (strain ATCC 14580 / DSM 13 / JCM 2505 / CCUG 7422 / NBRC 12200 / NCIMB 9375 / NCTC 10341 / NRRL NRS-1264 / Gibson 46), this protein is Glycerol kinase.